The primary structure comprises 350 residues: Gene 40 protein (350 aa).

237–244 (AVKESGKT) contacts ATP.

The sequence is that of Gene 40 protein (40) from Bacillus phage SP01 (Bacteriophage SP01).